A 255-amino-acid polypeptide reads, in one-letter code: tRNA (guanine-N(1)-)-methyltransferase (255 aa).

S-adenosyl-L-methionine-binding positions include Gly113 and 133-138 (IGDYVL).

It belongs to the RNA methyltransferase TrmD family. As to quaternary structure, homodimer.

It is found in the cytoplasm. It catalyses the reaction guanosine(37) in tRNA + S-adenosyl-L-methionine = N(1)-methylguanosine(37) in tRNA + S-adenosyl-L-homocysteine + H(+). Specifically methylates guanosine-37 in various tRNAs. The protein is tRNA (guanine-N(1)-)-methyltransferase of Salmonella schwarzengrund (strain CVM19633).